The chain runs to 458 residues: MGKEKTHVNVVVIGHVDSGKSTTTGHLIYKCGGIDKRTIEEFEKEAAELGKGSFKYAWVLDKLKAERERGITIDIALWKFETPKYNVTVIDAPGHRDFIKNMITGTSQADCAILIIAGGTGEFEAGISKDGQTREHALLAFTLGFRQLIVAINKMDTTKWSQDRYNEIVKEVSGFIKKIGFNPKSVPFVPISGWHGDNMLDESTNMPWFKGWNKETKAGSKTGKTLLEAIDAIEPPVRPSDKPLRLPLQDVYKIGGIGTVPVGRVETGTIKAGMVVNFAPAAVTTEVKSVEMHHETLTEGLPGDNVGFNVKNVSVKDIRRGNVCSDSKNDPAKESASFTAQVIILNHPGQISAGYAPVLDCHTAHIACKFSELIEKIDRRSGKKMEDSPKFVKSGDSAIVKMVPSKPMCVEAYTDYPPLGRFAVRDMRQTVAVGVIKAVEKVDKAGKVTKAAAKASKK.

At Gly-2 the chain carries N,N,N-trimethylglycine. N6,N6-dimethyllysine; alternate is present on Lys-3. Lys-3 is subject to N6-methyllysine; alternate. One can recognise a tr-type G domain in the interval 5 to 240; sequence KTHVNVVVIG…DAIEPPVRPS (236 aa). Positions 14-21 are G1; the sequence is GHVDSGKS. 14–21 serves as a coordination point for GTP; sequence GHVDSGKS. At Lys-30 the chain carries N6-methyllysine. The tract at residues 70–74 is G2; it reads GITID. At Lys-79 the chain carries N6,N6,N6-trimethyllysine. Residues 91-94 are G3; it reads DAPG. Residues 91 to 95 and 153 to 156 each bind GTP; these read DAPGH and NKMD. Residues 153 to 156 form a G4 region; it reads NKMD. The interval 192 to 194 is G5; sequence SGW. Position 316 is an N6,N6-dimethyllysine; alternate (Lys-316). Position 316 is an N6-methyllysine; alternate (Lys-316). Residue Lys-390 is modified to N6-methyllysine.

The protein belongs to the TRAFAC class translation factor GTPase superfamily. Classic translation factor GTPase family. EF-Tu/EF-1A subfamily.

Its subcellular location is the cytoplasm. This protein promotes the GTP-dependent binding of aminoacyl-tRNA to the A-site of ribosomes during protein biosynthesis. The sequence is that of Elongation factor 1-alpha (TEF-1) from Mucor circinelloides f. lusitanicus (Mucor racemosus var. lusitanicus).